The sequence spans 211 residues: LexA repressor (211 aa).

Residues 31–51 constitute a DNA-binding region (H-T-H motif); the sequence is RAEISKELGFRSPNAAEEHLK. Active-site for autocatalytic cleavage activity residues include Ser127 and Lys164.

Belongs to the peptidase S24 family. As to quaternary structure, homodimer.

The catalysed reaction is Hydrolysis of Ala-|-Gly bond in repressor LexA.. Functionally, represses a number of genes involved in the response to DNA damage (SOS response), including recA and lexA. In the presence of single-stranded DNA, RecA interacts with LexA causing an autocatalytic cleavage which disrupts the DNA-binding part of LexA, leading to derepression of the SOS regulon and eventually DNA repair. This Pasteurella multocida (strain Pm70) protein is LexA repressor.